We begin with the raw amino-acid sequence, 98 residues long: NADH-ubiquinone oxidoreductase chain 4L (98 aa).

The next 3 membrane-spanning stretches (helical) occupy residues 1–21 (MSMV…GLLV), 30–50 (LLCL…TILI), and 61–81 (IILL…LVMV).

This sequence belongs to the complex I subunit 4L family. In terms of assembly, core subunit of respiratory chain NADH dehydrogenase (Complex I) which is composed of 45 different subunits.

It is found in the mitochondrion inner membrane. It carries out the reaction a ubiquinone + NADH + 5 H(+)(in) = a ubiquinol + NAD(+) + 4 H(+)(out). Functionally, core subunit of the mitochondrial membrane respiratory chain NADH dehydrogenase (Complex I) which catalyzes electron transfer from NADH through the respiratory chain, using ubiquinone as an electron acceptor. Part of the enzyme membrane arm which is embedded in the lipid bilayer and involved in proton translocation. This is NADH-ubiquinone oxidoreductase chain 4L (MT-ND4L) from Pagophilus groenlandicus (Harp seal).